The sequence spans 880 residues: MSEEKNLPTKYQPTEIEAGRYQKWLDQDLFKPSGDKKAKPYSIVIPPPNVTGKLHLGHAWDTTLQDMIIRQKRMQGFDTLWLPGMDHAGIATQAKVEEKLAQQGISRYDLGREKFVDQVWEWKEEYASHIREQWAKMGLSLDYSRERFTLDEGLSEAVRKVFVSLYEKDLIYRGEYIINWDPKAKTALSDIEVIHKDIEGAFYHMSYPLSDGSGVVEIATTRPETMLGDTAIAVHPEDERYQELIGKTVVLPLVDKEIPIIADDYVDMEFGTGVVKITPAHDPNDFEVGNRHDLPRVNVMNEDGTMNELAGKYEGMDRFAARKAIVSDLKELGRLIKIETMNHSVGHSERTGVVVEPRLSTQWFVKMGPLAEKAMKNQETEDAVEFYPPRFNQTFLRWMENVHDWVISRQLWWGHQIPAWYHKETGEMYVGMEEPADSENWVQDSDVLDTWFSSALWPFSTMGWPNEASEDYQRYFPTSTLVTGYDIIFFWVSRMIFQSLEFTGERPFQNVLIHGLIRDEQGRKMSKSLGNGIDPMDVIEKYGADALRWFLSNGSAPGQDVRFSYEKMDASWNFINKIWNASRFVIMNVEGMTAADIDFSGEKTVADRWILTRLNETVARVTELFDRFEFGEAGRQLYNFIWDDFCDWYIEMSKEILYGDNEAAKQTTRSILVYTLDQILRLLHPIMPFVTEEIWEKIPHQGESLVVAEYPVVHEEFNDEAAARGMEVLKEVIRSVRNIRAEVNTPLSKPITLLIKTNDTEVEEFLTANTSYLERFCNPEELVISREIEAPELAMSAVLTGAELFLPLAGLINIEEEIARLEKELDKWTKEVKRVQGKLSNERFVSNAPDEVVEAERAKEKDYLEKQEAVKERIAQLRSI.

Residues 48–58 (PNVTGKLHLGH) carry the 'HIGH' region motif. A 'KMSKS' region motif is present at residues 524–528 (KMSKS). ATP is bound at residue lysine 527. The stretch at 808–879 (LAGLINIEEE…VKERIAQLRS (72 aa)) forms a coiled coil.

It belongs to the class-I aminoacyl-tRNA synthetase family. ValS type 1 subfamily. Monomer.

It localises to the cytoplasm. It carries out the reaction tRNA(Val) + L-valine + ATP = L-valyl-tRNA(Val) + AMP + diphosphate. Catalyzes the attachment of valine to tRNA(Val). As ValRS can inadvertently accommodate and process structurally similar amino acids such as threonine, to avoid such errors, it has a 'posttransfer' editing activity that hydrolyzes mischarged Thr-tRNA(Val) in a tRNA-dependent manner. The polypeptide is Valine--tRNA ligase (Enterococcus faecalis (strain ATCC 700802 / V583)).